A 101-amino-acid polypeptide reads, in one-letter code: uncharacterized protein (101 aa).

Residues Val-58–Ile-80 form a helical membrane-spanning segment.

It is found in the membrane. This is an uncharacterized protein from Saccharomyces cerevisiae (strain ATCC 204508 / S288c) (Baker's yeast).